A 173-amino-acid polypeptide reads, in one-letter code: Probable capsid assembly scaffolding protein (173 aa).

A compositionally biased stretch (low complexity) spans 1–13 (MSDNPTPESTPEA). Residues 1-27 (MSDNPTPESTPEAETPEVEKPMEPQGK) are disordered. Positions 36-84 (SLRQEAAAARVAKKDAVEAAEARVKAEYEAKLAERDTAYTELQNQLGQA) form a coiled coil. The disordered stretch occupies residues 134 to 158 (GNKTPSPAFDPSQGRGGKPPIPLNG).

The protein belongs to the L5likevirus scaffolding protein family.

In terms of biological role, scaffolding protein involved in the icosahedric procapsid assembly. Coassembles with the capsid proteins to form the procapsid, in which the scaffolding protein is found within the external shell of icosahedrally arranged capsid protein subunits. The polypeptide is Probable capsid assembly scaffolding protein (16) (Mycobacterium (Mycobacteriophage L5)).